A 376-amino-acid polypeptide reads, in one-letter code: ATP synthase gamma chain, chloroplastic (376 aa).

A chloroplast-targeting transit peptide spans 1-52 (MSCSNVTMLVSSKPSLPDASNLSFRSAFNPFQLPSQNSSSSCTPSRPTSIQC). Residue Cys133 is part of the active site. Cys250 and Cys256 are joined by a disulfide.

It belongs to the ATPase gamma chain family. In terms of assembly, F-type ATPases have 2 components, CF(1) - the catalytic core - and CF(0) - the membrane proton channel. CF(1) has five subunits: alpha(3), beta(3), gamma(1), delta(1), epsilon(1). CF(0) has four main subunits: a, b, b' and c.

It is found in the plastid. The protein localises to the chloroplast thylakoid membrane. Functionally, produces ATP from ADP in the presence of a proton gradient across the membrane. The gamma chain is believed to be important in regulating ATPase activity and the flow of protons through the CF(0) complex. The protein is ATP synthase gamma chain, chloroplastic (ATPC) of Pisum sativum (Garden pea).